The primary structure comprises 219 residues: MSESENNTTPAVAARDDRLVWVDLEMTGLDLKRHVIVEVAALVTDANLNVLGEGVDLVVHATEEELAQMDDFVTNMHESSGLTEQIRESAVTLKEAEDAVLALIEKHCDPAHPAPLAGNSIATDRAFIREQMPRLDEALHYRMVDVSSVKELARRWYPRVYYKQPEKGLAHRALADIVESIRELDYYRRSFFVAEPGPTSEQCADDAQAAVDRFAPYFD.

Positions 19-184 (LVWVDLEMTG…ADIVESIREL (166 aa)) constitute an Exonuclease domain. Tyr141 is a catalytic residue.

Belongs to the oligoribonuclease family.

It is found in the cytoplasm. Functionally, 3'-to-5' exoribonuclease specific for small oligoribonucleotides. This Corynebacterium glutamicum (strain R) protein is Oligoribonuclease.